The sequence spans 205 residues: Outer-membrane lipoprotein LolB (205 aa).

Positions 1–17 are cleaved as a signal peptide; the sequence is MFLRHVIVFSFIALLAG. Cys18 carries the N-palmitoyl cysteine lipid modification. Cys18 carries S-diacylglycerol cysteine lipidation.

Belongs to the LolB family. Monomer.

The protein localises to the cell outer membrane. Its function is as follows. Plays a critical role in the incorporation of lipoproteins in the outer membrane after they are released by the LolA protein. The chain is Outer-membrane lipoprotein LolB from Pseudomonas fluorescens (strain Pf0-1).